The primary structure comprises 139 residues: Ribulose bisphosphate carboxylase small subunit (139 aa).

The protein belongs to the RuBisCO small chain family. In terms of assembly, heterohexadecamer of 8 large and 8 small subunits.

The protein resides in the plastid. It is found in the chloroplast. In terms of biological role, ruBisCO catalyzes two reactions: the carboxylation of D-ribulose 1,5-bisphosphate, the primary event in carbon dioxide fixation, as well as the oxidative fragmentation of the pentose substrate in the photorespiration process. Both reactions occur simultaneously and in competition at the same active site. Although the small subunit is not catalytic it is essential for maximal activity. The sequence is that of Ribulose bisphosphate carboxylase small subunit from Detonula confervacea (Marine diatom).